Consider the following 363-residue polypeptide: Carbamoyl phosphate synthase small chain (363 aa).

2 CPSase regions span residues 1-168 (MTKR…ASPG) and 1-172 (MTKR…DGKR). 3 residues coordinate L-glutamine: Ser46, Gly220, and Gly222. One can recognise a Glutamine amidotransferase type-1 domain in the interval 172–359 (RVVLVDYGVK…MEMMNVKEEG (188 aa)). Catalysis depends on Cys247, which acts as the Nucleophile. Leu248, Gln251, Asn289, Gly291, and Tyr292 together coordinate L-glutamine. Residues His332 and Glu334 contribute to the active site.

The protein belongs to the CarA family. As to quaternary structure, composed of two chains; the small (or glutamine) chain promotes the hydrolysis of glutamine to ammonia, which is used by the large (or ammonia) chain to synthesize carbamoyl phosphate. Tetramer of heterodimers (alpha,beta)4.

The catalysed reaction is hydrogencarbonate + L-glutamine + 2 ATP + H2O = carbamoyl phosphate + L-glutamate + 2 ADP + phosphate + 2 H(+). The enzyme catalyses L-glutamine + H2O = L-glutamate + NH4(+). It participates in amino-acid biosynthesis; L-arginine biosynthesis; carbamoyl phosphate from bicarbonate: step 1/1. Its pathway is pyrimidine metabolism; UMP biosynthesis via de novo pathway; (S)-dihydroorotate from bicarbonate: step 1/3. Functionally, small subunit of the glutamine-dependent carbamoyl phosphate synthetase (CPSase). CPSase catalyzes the formation of carbamoyl phosphate from the ammonia moiety of glutamine, carbonate, and phosphate donated by ATP, constituting the first step of 2 biosynthetic pathways, one leading to arginine and/or urea and the other to pyrimidine nucleotides. The small subunit (glutamine amidotransferase) binds and cleaves glutamine to supply the large subunit with the substrate ammonia. This is Carbamoyl phosphate synthase small chain from Listeria innocua serovar 6a (strain ATCC BAA-680 / CLIP 11262).